Consider the following 581-residue polypeptide: Bestrophin-1 (581 aa).

Residues 1–31 (MTVTYSSQVANARLGSFSRLLLCWRGSIYKL) lie on the Cytoplasmic side of the membrane. Ala10 provides a ligand contact to Ca(2+). The chain crosses the membrane as a helical span at residues 32–51 (LYGEFLIFLLCYYIIRFIYR). Over 52–60 (MALTDEQQV) the chain is Extracellular. The helical transmembrane segment at 61 to 82 (IFEKLTLYCDSYIQLIPISFVL) threads the bilayer. Residues 83–237 (GFYVTLVVTR…DWISVPLVYT (155 aa)) lie on the Cytoplasmic side of the membrane. Residues 238–255 (QVVTVAVYSFFLACLVGR) traverse the membrane as a helical segment. Residues 256-274 (QFLNPAKAYPGHEMDLVVP) lie on the Extracellular side of the membrane. A helical membrane pass occupies residues 275–288 (LFTFLQFFFYAGWL). Residues 289–581 (KVAEQLINPF…ALENRDEAHS (293 aa)) lie on the Cytoplasmic side of the membrane. The Ca(2+) site is built by Gln293, Asn296, Asp301, and Asp304. Residues 416–440 (EGHFHEGHPKNLRGARLDSSDQEDS) form a disordered region.

This sequence belongs to the anion channel-forming bestrophin (TC 1.A.46) family. Calcium-sensitive chloride channel subfamily. In terms of assembly, interacts with YWHAG; this interaction promotes the ligand-gated L-glutamate channel activity leading to the positive regulation of NMDA glutamate receptor activity through the L-glutamate secretion. In terms of processing, phosphorylated (in vitro). Dephosphorylated (in vitro) by PP2A.

It is found in the cell membrane. Its subcellular location is the basolateral cell membrane. It carries out the reaction chloride(in) = chloride(out). It catalyses the reaction hydrogencarbonate(in) = hydrogencarbonate(out). The catalysed reaction is 4-aminobutanoate(in) = 4-aminobutanoate(out). The enzyme catalyses L-glutamate(out) = L-glutamate(in). Functionally, ligand-gated anion channel that allows the movement of anions across cell membranes when activated by calcium (Ca2+). Allows the movement of chloride and hydrogencarbonate. Found in a partially open conformation leading to significantly smaller chloride movement. Upon F2R/PAR-1 activation, the sequestered calcium is released into the cytosol of astrocytes, leading to the (Ca2+)-dependent release of L-glutamate into the synaptic cleft that targets the neuronal postsynaptic GRIN2A/NMDAR receptor resulting in the synaptic plasticity regulation. Upon activation of the norepinephrine-alpha-1 adrenergic receptor signaling pathway, transports as well D-serine than L-glutamate in a (Ca2+)-dependent manner, leading to activation of adjacent NMDAR receptors and therefore regulates the heterosynaptic long-term depression and metaplasticity during initial memory acquisition. Releases the 4-aminobutanoate neurotransmitter in a (Ca2+)-dependent manner, and participates in its tonic release from cerebellar glial cells. The polypeptide is Bestrophin-1 (Sus scrofa (Pig)).